The primary structure comprises 132 residues: Fatty acid-binding protein 9 (132 aa).

Serine 13, serine 14, serine 44, and serine 91 each carry phosphoserine.

Belongs to the calycin superfamily. Fatty-acid binding protein (FABP) family.

Its subcellular location is the cytoplasm. The protein is Fatty acid-binding protein 9 (FABP9) of Homo sapiens (Human).